Consider the following 382-residue polypeptide: Mannitol-1-phosphate 5-dehydrogenase (382 aa).

3 to 14 (ALHFGAGNIGRG) is an NAD(+) binding site. Residue K269 is modified to N6-acetyllysine.

This sequence belongs to the mannitol dehydrogenase family.

It catalyses the reaction D-mannitol 1-phosphate + NAD(+) = beta-D-fructose 6-phosphate + NADH + H(+). The polypeptide is Mannitol-1-phosphate 5-dehydrogenase (Escherichia coli O127:H6 (strain E2348/69 / EPEC)).